The sequence spans 73 residues: Crustacean hyperglycemic hormone (73 aa).

Cystine bridges form between C7/C43, C23/C39, and C26/C52. At S73 the chain carries Serine amide.

As to expression, produced by the medulla terminalis X-organ in the eyestalks and transported to the sinus gland where they are stored and released. Found also in the brain; in the neuroendocrine structures of the protocerebrum.

The protein resides in the secreted. Hormone found in the sinus gland of isopods and decapods which controls the blood sugar level. Has a secretagogue action over the amylase released from the midgut gland. May act as a stress hormone and may be involved in the control of molting and reproduction. The polypeptide is Crustacean hyperglycemic hormone (Armadillidium vulgare (Pillbug)).